Consider the following 578-residue polypeptide: Septation ring formation regulator EzrA (578 aa).

Residues 1–8 lie on the Extracellular side of the membrane; the sequence is MKNNWIII. Residues 9 to 27 traverse the membrane as a helical segment; it reads LVLVIVIIAAVLYLIGYFM. Residues 28–578 lie on the Cytoplasmic side of the membrane; sequence RKKNQEQLDE…NINNPNLTAI (551 aa). Coiled-coil stretches lie at residues 103 to 165, 256 to 285, and 394 to 490; these read RFMK…DDKA, QNFA…AAVE, and KILD…DDLE.

This sequence belongs to the EzrA family.

The protein localises to the cell membrane. Functionally, negative regulator of FtsZ ring formation; modulates the frequency and position of FtsZ ring formation. Inhibits FtsZ ring formation at polar sites. Interacts either with FtsZ or with one of its binding partners to promote depolymerization. The protein is Septation ring formation regulator EzrA of Enterococcus faecalis (strain ATCC 700802 / V583).